The following is a 608-amino-acid chain: Fatty acid amide hydrolase (608 aa).

Active-site charge relay system residues include Lys-206 and Ser-282. A substrate-binding site is contributed by 303 to 306; the sequence is GGGS. Catalysis depends on Ser-306, which acts as the Acyl-ester intermediate.

It belongs to the amidase family. In terms of assembly, forms homodimers.

The protein resides in the endoplasmic reticulum membrane. It is found in the cell membrane. The catalysed reaction is N-(9Z,12Z-octadecadienoyl)-ethanolamine + H2O = ethanolamine + (9Z,12Z)-octadecadienoate. It catalyses the reaction N-hexadecanoylethanolamine + H2O = ethanolamine + hexadecanoate. It carries out the reaction N-dodecanoylethanolamine + H2O = dodecanoate + ethanolamine. With respect to regulation, inhibited by methyl arachidonyl fluorophosphonate (MAFP). Its function is as follows. Catalyzes the hydrolysis of bioactive endogenous fatty acid amides to their corresponding acids. The hydrolysis of endogenous amidated lipids terminates their participation as lipid mediators in various signaling systems. Converts a wide range of N-acylethanolamines (NAEs) to their corresponding free fatty acids and ethanolamine. The polypeptide is Fatty acid amide hydrolase (Oryza sativa subsp. japonica (Rice)).